The chain runs to 1535 residues: Protein artichoke (1535 aa).

Residues 1 to 19 form the signal peptide; it reads MMLLPIFLLLCIGINLIRA. LRR repeat units follow at residues 64–87, 89–110, 112–135, 136–157, 158–181, 183–206, 207–230, 231–256, 257–280, 281–304, 306–328, 331–356, 357–380, 382–404, 406–429, 430–452, 453–476, 478–500, 521–545, 548–571, 573–595, 597–619, 620–643, 645–667, 669–691, 692–714, 716–738, 739–762, 764–786, 788–810, 811–834, 835–858, 860–882, and 883–906; these read KGRI…FFGS, QIVR…WLNE, ENGL…SLNG, MINM…DFSG, LLSL…LFRH, PKLQ…LFDG, LISL…ALSR, LPNL…IVKD, LEHL…SFVD, LPNL…AFLR, PQLK…SLLQ, GSGV…LLDA, LPRL…ALRG, GTLE…ALMA, PALR…FWNL, PGLK…LLAG, LPSL…SFRH, PLLE…TLIH, LPRI…ASKD, LPNL…GFQG, MELR…SFIG, QRLE…ALLP, LAEL…FFSN, SRLE…AFDT, RSLE…LGNL, NNLR…VIGG, RNVV…TFRN, LPKL…ALKG, DELQ…VFEE, PSLL…SFHN, ANSL…GLRS, MRNL…PLKA, NWLV…PFET, and MPRL…TFRN. Residues 919–963 form the LRRCT domain; sequence NPIDCNCEMQWLSVWLQETNFPYPGPKCQDGRLLRSARMERSLCV. Disordered regions lie at residues 1036–1055, 1253–1331, 1377–1416, and 1429–1449; these read HSAI…NSNI, TQAR…DSQY, VTTT…GRST, and AQPT…EGVA. The span at 1253 to 1270 shows a compositional bias: polar residues; it reads TQARPKPTKSSGESSETA. Low complexity-rich tracts occupy residues 1271-1285 and 1293-1315; these read TYEV…TTTT and TSTT…TQVT. Polar residues-rich tracts occupy residues 1316-1328 and 1377-1391; these read PAEN…TELD and VTTT…NQVT. Over residues 1398–1407 the composition is skewed to pro residues; it reads TVPPPPPASP.

The protein resides in the secreted. Its subcellular location is the extracellular space. The protein localises to the extracellular matrix. It is found in the cytoplasm. Functionally, required for normal morphology and function of ciliated sensory organs. The sequence is that of Protein artichoke from Drosophila melanogaster (Fruit fly).